The primary structure comprises 82 residues: Alpha-defensin 17 (82 aa).

Residues 1-8 (LLAFQVQA) form the signal peptide. Positions 1 to 43 (LLAFQVQADPIQNTDEETKTEEQPGEEDQAVSVSFGDPEGTSL) are disordered. The propeptide occupies 9–47 (DPIQNTDEETKTEEQPGEEDQAVSVSFGDPEGTSLQEES). Intrachain disulfides connect C53/C81, C55/C70, and C60/C80.

It belongs to the alpha-defensin family.

It is found in the secreted. Its function is as follows. Probably contributes to the antimicrobial barrier function of the small bowel mucosa. In Mus musculus (Mouse), this protein is Alpha-defensin 17 (Defa17).